Consider the following 99-residue polypeptide: Nucleoid-associated protein MGAS2096_Spy1605 (99 aa).

It belongs to the YbaB/EbfC family. As to quaternary structure, homodimer.

The protein resides in the cytoplasm. The protein localises to the nucleoid. Binds to DNA and alters its conformation. May be involved in regulation of gene expression, nucleoid organization and DNA protection. The protein is Nucleoid-associated protein MGAS2096_Spy1605 of Streptococcus pyogenes serotype M12 (strain MGAS2096).